Here is a 319-residue protein sequence, read N- to C-terminus: Dehydrogenase/reductase SDR family member 9 (319 aa).

The first 17 residues, 1-17, serve as a signal peptide directing secretion; that stretch reads MLFWVLGLLILCGFLWT. Residues 34 to 58 and aspartate 83 each bind NAD(+); that span reads ITGC…HVIA. Serine 164 lines the substrate pocket. The active-site Proton acceptor is the tyrosine 176. Lysine 180 contributes to the NAD(+) binding site.

Belongs to the short-chain dehydrogenases/reductases (SDR) family. Homotetramer. In terms of tissue distribution, highly expressed in trachea and epidermis. Detected at lower levels in spinal cord, bone marrow, brain, tongue, esophagus, heart, colon, testis, placenta, lung, skeletal muscle and lymph node.

The protein resides in the microsome membrane. It is found in the endoplasmic reticulum membrane. It catalyses the reaction 3beta-hydroxy-5alpha-pregnane-20-one + NAD(+) = 5alpha-pregnane-3,20-dione + NADH + H(+). It carries out the reaction 17beta-hydroxy-5alpha-androstan-3-one + NAD(+) = 5alpha-androstan-3,17-dione + NADH + H(+). The catalysed reaction is androsterone + NAD(+) = 5alpha-androstan-3,17-dione + NADH + H(+). The enzyme catalyses 5alpha-androstane-3alpha,17beta-diol + NAD(+) = 17beta-hydroxy-5alpha-androstan-3-one + NADH + H(+). It catalyses the reaction all-trans-retinol + NAD(+) = all-trans-retinal + NADH + H(+). It carries out the reaction 3alpha-hydroxy-5alpha-pregnan-20-one + NAD(+) = 5alpha-pregnane-3,20-dione + NADH + H(+). In terms of biological role, 3-alpha-hydroxysteroid dehydrogenase that converts 3-alpha-tetrahydroprogesterone (allopregnanolone) to dihydroxyprogesterone and 3-alpha-androstanediol to dihydroxyprogesterone. Also plays a role in the biosynthesis of retinoic acid from retinaldehyde. Can utilize both NADH and NADPH. This chain is Dehydrogenase/reductase SDR family member 9 (DHRS9), found in Homo sapiens (Human).